We begin with the raw amino-acid sequence, 248 residues long: PF03932 family protein CutC (248 aa).

The protein belongs to the CutC family. Homodimer.

The protein resides in the cytoplasm. The sequence is that of PF03932 family protein CutC from Escherichia coli (strain SMS-3-5 / SECEC).